A 92-amino-acid chain; its full sequence is uncharacterized protein (92 aa).

This is an uncharacterized protein from Pasteurella multocida (strain Pm70).